The chain runs to 327 residues: Pectate lyase A (327 aa).

A signal peptide spans 1-19 (MQNLKFLIAAVSCLGPALA). An N-linked (GlcNAc...) asparagine glycan is attached at Asn99. The Ca(2+) site is built by Asp140, Asp169, and Asp173. Arg226 is an active-site residue.

It belongs to the polysaccharide lyase 1 family. Requires Ca(2+) as cofactor.

Its subcellular location is the secreted. It catalyses the reaction Eliminative cleavage of (1-&gt;4)-alpha-D-galacturonan to give oligosaccharides with 4-deoxy-alpha-D-galact-4-enuronosyl groups at their non-reducing ends.. In terms of biological role, pectinolytic enzyme consist of four classes of enzymes: pectin lyase, polygalacturonase, pectin methylesterase and rhamnogalacturonase. Among pectinolytic enzymes, pectin lyase is the most important in depolymerization of pectin, since it cleaves internal glycosidic bonds of highly methylated pectins. Favors pectate, the anion, over pectin, the methyl ester. In Emericella nidulans (strain FGSC A4 / ATCC 38163 / CBS 112.46 / NRRL 194 / M139) (Aspergillus nidulans), this protein is Pectate lyase A (plyA).